A 356-amino-acid chain; its full sequence is Nucleotide-binding protein GDI1189/Gdia_1902 (356 aa).

20–27 (GLSGAGKS) contributes to the ATP binding site. A GTP-binding site is contributed by 65-68 (DSRT). The segment at 285–313 (EPGGTCDSPGKPAHIEKGAAPTDVQSGGA) is disordered.

The protein belongs to the RapZ-like family.

Displays ATPase and GTPase activities. The polypeptide is Nucleotide-binding protein GDI1189/Gdia_1902 (Gluconacetobacter diazotrophicus (strain ATCC 49037 / DSM 5601 / CCUG 37298 / CIP 103539 / LMG 7603 / PAl5)).